The sequence spans 108 residues: Protein RnfH (108 aa).

Residues Ala86–Ala108 are disordered.

Belongs to the UPF0125 (RnfH) family.

In Pseudoalteromonas atlantica (strain T6c / ATCC BAA-1087), this protein is Protein RnfH.